The following is a 755-amino-acid chain: Subtilisin-like protease 4 (755 aa).

Positions 1-20 (MDYFLFIALTFLLTFHVHNA) are cleaved as a signal peptide. One can recognise an Inhibitor I9 domain in the interval 41–119 (YIIHVTGPEG…ISAHPQRVLH (79 aa)). Residues 128–611 (FLGLQQDTGV…SGHVNPSRAN (484 aa)) enclose the Peptidase S8 domain. The active-site Charge relay system is the D153. Residue N182 is glycosylated (N-linked (GlcNAc...) asparagine). H217 functions as the Charge relay system in the catalytic mechanism. N297, N325, N393, N468, and N529 each carry an N-linked (GlcNAc...) asparagine glycan. Positions 376 to 461 (PLAYAGKNGK…ATHVSYAAGI (86 aa)) constitute a PA domain. S544 acts as the Charge relay system in catalysis. N-linked (GlcNAc...) asparagine glycosylation is found at N706 and N727.

This sequence belongs to the peptidase S8 family.

It is found in the secreted. The protein localises to the extracellular space. Its subcellular location is the apoplast. Functionally, required for arbuscular mycorrhiza (AM) development during AM symbiosis with AM fungi (e.g. Glomeromycota intraradices). The protein is Subtilisin-like protease 4 of Lotus japonicus (Lotus corniculatus var. japonicus).